A 500-amino-acid chain; its full sequence is MAKTLPIMFQGTHSDAGKSVIATAFCRMFAQDGWKTAPFKSQNMSLNSYVTPDGNEIGRAQGIQAEAAGVAARAEMNPILIKPSREHESQIVVLGKPYGNMQAFAYRNEFFHQGLAVIRQSLETLMNEYDRIVIEGAGSPAEVNLNDRELVNMRVARLANAPVVLIGDIERGGVFASLVGTLALLEPEDRKRVVGVIINKFRGDAALLKPGLDWFEQYTGVPVLGVVPHLPDLAIDAEDSLALERFAASSDDKGAIDIAVIRCPKIANFTDIDPLLTEPDCRVRLVTHAGELGEPDVIVLPGSKNTIEDLMYMKKRGLASRIVSLVNEGKTTVVGLCGGYQMLGDVIRDPHGVETPFPEVKGLGLLPVATTLERTKTTVRSEGMLTWAGERFSVRGYEIHMGRSTPLPGYVPLIEIGGRGEGAKREDGRVLGTYMHDLFHNDAFRTAFFNVIRREKGLASSAVRPFHSLKEAAFDRLAAHVRQHVAVERIEQMMRQFQQR.

Residues 255–444 (AIDIAVIRCP…MHDLFHNDAF (190 aa)) enclose the GATase cobBQ-type domain. Catalysis depends on Cys-337, which acts as the Nucleophile. Residue His-436 is part of the active site.

Belongs to the CobB/CobQ family. CobQ subfamily.

The protein operates within cofactor biosynthesis; adenosylcobalamin biosynthesis. In terms of biological role, catalyzes amidations at positions B, D, E, and G on adenosylcobyrinic A,C-diamide. NH(2) groups are provided by glutamine, and one molecule of ATP is hydrogenolyzed for each amidation. The chain is Cobyric acid synthase from Geobacillus thermodenitrificans (strain NG80-2).